The primary structure comprises 479 residues: Ribosomal RNA small subunit methyltransferase F (479 aa).

Residues 125 to 131 (AAAPGSK), E149, D176, and D194 each bind S-adenosyl-L-methionine. C247 acts as the Nucleophile in catalysis.

It belongs to the class I-like SAM-binding methyltransferase superfamily. RsmB/NOP family.

The protein resides in the cytoplasm. It catalyses the reaction cytidine(1407) in 16S rRNA + S-adenosyl-L-methionine = 5-methylcytidine(1407) in 16S rRNA + S-adenosyl-L-homocysteine + H(+). Functionally, specifically methylates the cytosine at position 1407 (m5C1407) of 16S rRNA. The chain is Ribosomal RNA small subunit methyltransferase F from Escherichia coli (strain SMS-3-5 / SECEC).